The following is a 415-amino-acid chain: Gamma-glutamyl phosphate reductase (415 aa).

This sequence belongs to the gamma-glutamyl phosphate reductase family.

The protein resides in the cytoplasm. It carries out the reaction L-glutamate 5-semialdehyde + phosphate + NADP(+) = L-glutamyl 5-phosphate + NADPH + H(+). The protein operates within amino-acid biosynthesis; L-proline biosynthesis; L-glutamate 5-semialdehyde from L-glutamate: step 2/2. Functionally, catalyzes the NADPH-dependent reduction of L-glutamate 5-phosphate into L-glutamate 5-semialdehyde and phosphate. The product spontaneously undergoes cyclization to form 1-pyrroline-5-carboxylate. The protein is Gamma-glutamyl phosphate reductase of Bacillus mycoides (strain KBAB4) (Bacillus weihenstephanensis).